The following is a 500-amino-acid chain: Glucose-6-phosphate isomerase (500 aa).

E332 (proton donor) is an active-site residue. Residues H363 and K473 contribute to the active site.

This sequence belongs to the GPI family.

Its subcellular location is the cytoplasm. It catalyses the reaction alpha-D-glucose 6-phosphate = beta-D-fructose 6-phosphate. It functions in the pathway carbohydrate biosynthesis; gluconeogenesis. The protein operates within carbohydrate degradation; glycolysis; D-glyceraldehyde 3-phosphate and glycerone phosphate from D-glucose: step 2/4. In terms of biological role, catalyzes the reversible isomerization of glucose-6-phosphate to fructose-6-phosphate. The protein is Glucose-6-phosphate isomerase of Rhizorhabdus wittichii (strain DSM 6014 / CCUG 31198 / JCM 15750 / NBRC 105917 / EY 4224 / RW1) (Sphingomonas wittichii).